Reading from the N-terminus, the 169-residue chain is Der GTPase-activating protein YihI (169 aa).

2 disordered regions span residues 1–100 (MKPS…AELE) and 144–169 (GLSY…LRGN). Over residues 10–19 (SKGHAKARRK) the composition is skewed to basic residues. Positions 20–30 (TREELDQEARD) are enriched in basic and acidic residues. The span at 31–40 (RKRQKKRRGH) shows a compositional bias: basic residues. Residues 49–58 (GNTTSGSKGQ) show a composition bias toward polar residues. Residues 147–159 (YDDDEEEEEDEKQ) are compositionally biased toward acidic residues. Basic and acidic residues predominate over residues 160–169 (EDMMRLLRGN).

This sequence belongs to the YihI family. In terms of assembly, interacts with Der.

A GTPase-activating protein (GAP) that modifies Der/EngA GTPase function. May play a role in ribosome biogenesis. The sequence is that of Der GTPase-activating protein YihI from Escherichia coli O6:H1 (strain CFT073 / ATCC 700928 / UPEC).